The following is a 289-amino-acid chain: ATP synthase gamma chain (289 aa).

The protein belongs to the ATPase gamma chain family. In terms of assembly, F-type ATPases have 2 components, CF(1) - the catalytic core - and CF(0) - the membrane proton channel. CF(1) has five subunits: alpha(3), beta(3), gamma(1), delta(1), epsilon(1). CF(0) has three main subunits: a, b and c.

It is found in the cell inner membrane. Produces ATP from ADP in the presence of a proton gradient across the membrane. The gamma chain is believed to be important in regulating ATPase activity and the flow of protons through the CF(0) complex. The polypeptide is ATP synthase gamma chain (Coxiella burnetii (strain CbuG_Q212) (Coxiella burnetii (strain Q212))).